The following is a 443-amino-acid chain: Dynein regulatory complex protein 9 (443 aa).

Disordered regions lie at residues 1 to 34 (MEED…TVEE) and 415 to 443 (GFKM…GKKK). Residues 393 to 422 (ELKSVIKLQAWWRGTMIRREIGGFKMPKDK) form the IQ domain. Positions 415–430 (GFKMPKDKVDSKDSKG) are enriched in basic and acidic residues. Basic residues predominate over residues 431-443 (KGKGKDKRRGKKK).

This sequence belongs to the DRC9 family. In terms of assembly, component of the nexin-dynein regulatory complex (N-DRC). Interacts (via IQ domain) with CALM when calcium levels are low. Does not interact with CALM in the presence of Ca(2+). Interacts with the HSP70 proteins HSPA1L and HSPA8. May form a complex with CAMK4 and HSP70.

It is found in the cytoplasm. The protein resides in the cell projection. Its subcellular location is the cilium. The protein localises to the flagellum. It localises to the cytoskeleton. It is found in the flagellum axoneme. Component of the nexin-dynein regulatory complex (N-DRC), a key regulator of ciliary/flagellar motility which maintains the alignment and integrity of the distal axoneme and regulates microtubule sliding in motile axonemes. Binds calmodulin when cellular Ca(2+) levels are low and thereby contributes to the regulation of calcium and calmodulin-dependent protein kinase IV (CAMK4) activity; contributes to the regulation of CAMK4 signaling cascades. Required for normal axoneme assembly in sperm flagella, normal sperm tail formation and for male fertility. The polypeptide is Dynein regulatory complex protein 9 (IQCG) (Homo sapiens (Human)).